A 197-amino-acid chain; its full sequence is Elongation factor Ts (197 aa).

The segment at 81 to 84 is involved in Mg(2+) ion dislocation from EF-Tu; that stretch reads TDFV.

The protein belongs to the EF-Ts family.

The protein localises to the cytoplasm. Functionally, associates with the EF-Tu.GDP complex and induces the exchange of GDP to GTP. It remains bound to the aminoacyl-tRNA.EF-Tu.GTP complex up to the GTP hydrolysis stage on the ribosome. The sequence is that of Elongation factor Ts from Sulfurihydrogenibium sp. (strain YO3AOP1).